The chain runs to 1335 residues: Restriction of telomere capping protein 1 (1335 aa).

Residues Met1–Ser39 are disordered. WD repeat units follow at residues Asn207 to Asn248, Glu256 to Ser296, Thr305 to Ala342, Ala367 to Glu406, Asn439 to His486, and Leu489 to Glu527. 5 disordered regions span residues Pro559–Ile593, Thr600–Phe619, Ala630–Glu651, Lys736–Asp758, and Asn783–Arg824. The span at Ala630–Thr644 shows a compositional bias: low complexity. Over residues Ser808–Arg817 the composition is skewed to low complexity. One copy of the WD 7 repeat lies at Leu844 to Ser884. Disordered regions lie at residues Ala935 to Glu956 and Asp1007 to Pro1037. Composition is skewed to basic and acidic residues over residues Asp945–Glu956 and His1009–Pro1021. 6 positions are modified to phosphoserine: Ser1030, Ser1074, Ser1081, Ser1083, Ser1117, and Ser1127. WD repeat units lie at residues Arg1130 to Gly1170 and Val1217 to Leu1256. The RING-type; degenerate zinc finger occupies Leu1294 to Ile1335.

This sequence belongs to the WD repeat RTC1 family.

It is found in the vacuole. May be involved in a process influencing telomere capping. This is Restriction of telomere capping protein 1 (RTC1) from Saccharomyces cerevisiae (strain YJM789) (Baker's yeast).